A 211-amino-acid chain; its full sequence is MKLMICTSNKKKFEEISSILESLKKDENLDLEFVKPPKEIEVEEYANTFLSNAYLKAKAYYNAFGIPALADDSGLVVEAFSDNLERPGVYSARFYKDSFGSHVLKEEDFKLSKDELNNLKVLRLLEKEENRKAKFVSVVAIVLSNNYGIFGEGELKGHIAKEPFGNFGFGYDPIFIPEGYNTTLANIENKDKISHRRQALEAVFFMLKKML.

A substrate-binding site is contributed by 7–12; it reads TSNKKK. Mg(2+)-binding residues include Glu-43 and Asp-72. The Proton acceptor role is filled by Asp-72. Residues Ser-73, 169–172, Lys-190, and 195–196 each bind substrate; these read FGYD and HR.

The protein belongs to the HAM1 NTPase family. Homodimer. Requires Mg(2+) as cofactor.

The enzyme catalyses XTP + H2O = XMP + diphosphate + H(+). It catalyses the reaction dITP + H2O = dIMP + diphosphate + H(+). The catalysed reaction is ITP + H2O = IMP + diphosphate + H(+). Pyrophosphatase that catalyzes the hydrolysis of nucleoside triphosphates to their monophosphate derivatives, with a high preference for the non-canonical purine nucleotides XTP (xanthosine triphosphate), dITP (deoxyinosine triphosphate) and ITP. Seems to function as a house-cleaning enzyme that removes non-canonical purine nucleotides from the nucleotide pool, thus preventing their incorporation into DNA/RNA and avoiding chromosomal lesions. The sequence is that of dITP/XTP pyrophosphatase from Hydrogenobaculum sp. (strain Y04AAS1).